We begin with the raw amino-acid sequence, 317 residues long: Thiamine thiazole synthase (317 aa).

Residues Cys78, 99–100 (EA), Gly107, and Val172 contribute to the substrate site. At Cys206 the chain carries 2,3-didehydroalanine (Cys). Residues Asp208, His223, Met275, and 285–287 (RMG) each bind substrate.

This sequence belongs to the THI4 family. Homooctamer. Requires Fe cation as cofactor. Post-translationally, during the catalytic reaction, a sulfide is transferred from Cys-206 to a reaction intermediate, generating a dehydroalanine residue.

It localises to the cytoplasm. It is found in the nucleus. It catalyses the reaction [ADP-thiazole synthase]-L-cysteine + glycine + NAD(+) = [ADP-thiazole synthase]-dehydroalanine + ADP-5-ethyl-4-methylthiazole-2-carboxylate + nicotinamide + 3 H2O + 2 H(+). Its function is as follows. Involved in biosynthesis of the thiamine precursor thiazole. Catalyzes the conversion of NAD and glycine to adenosine diphosphate 5-(2-hydroxyethyl)-4-methylthiazole-2-carboxylic acid (ADT), an adenylated thiazole intermediate. The reaction includes an iron-dependent sulfide transfer from a conserved cysteine residue of the protein to a thiazole intermediate. The enzyme can only undergo a single turnover, which suggests it is a suicide enzyme. May have additional roles in adaptation to various stress conditions and in DNA damage tolerance. The protein is Thiamine thiazole synthase of Yarrowia lipolytica (strain CLIB 122 / E 150) (Yeast).